The sequence spans 449 residues: C4-dicarboxylate transport protein (449 aa).

A run of 8 helical transmembrane segments spans residues 20-42 (YLQLYFWVIIAIILGALLGHCYP), 62-84 (IISPVIFLTIVTGIASVAHVGTV), 91-113 (AMVYFLFFSTLALLLGLVVAHVV), 164-181 (ILQVLFVAVLFGIALALA), 202-224 (LVQMLMKMAPIGAFGAIAFTIGK), 239-261 (SFYLTSLLFVLVILGAVSWFSGF), 344-366 (LALFLVAMLSSKGAAGVSGAGFI), and 370-389 (ATLTVVPEVPIAGMALILGV).

The protein belongs to the dicarboxylate/amino acid:cation symporter (DAACS) (TC 2.A.23) family.

It is found in the cell inner membrane. In terms of biological role, responsible for the transport of dicarboxylates such as succinate, fumarate, and malate from the periplasm across the inner membrane. The polypeptide is C4-dicarboxylate transport protein (dctA) (Xylella fastidiosa (strain 9a5c)).